The primary structure comprises 434 residues: Deferrochelatase (434 aa).

Residues 1-45 (MRDKTGPKFGPYQPDDEAVSPSRRRLILGMGMVSGALVLGGAKTA) constitute a signal peptide (tat-type signal). Heme b-binding positions include 247 to 249 (GTA), H340, 345 to 347 (NPR), and R358.

It belongs to the DyP-type peroxidase family. EfeB subfamily. In terms of assembly, homodimer. Part of a ferrous iron transporter composed of EfeU, EfeO and EfeB. The cofactor is heme b. Predicted to be exported by the Tat system. The position of the signal peptide cleavage has not been experimentally proven.

Its subcellular location is the periplasm. The enzyme catalyses heme b + 2 H(+) = protoporphyrin IX + Fe(2+). Its function is as follows. Involved in the recovery of exogenous heme iron. Extracts iron from heme while preserving the protoporphyrin ring intact. In Yersinia pseudotuberculosis serotype I (strain IP32953), this protein is Deferrochelatase (efeB).